Here is a 512-residue protein sequence, read N- to C-terminus: Sucrose transport protein SUC2 (512 aa).

The Cytoplasmic segment spans residues 1–31; sequence MVSHPMEKAANGASALETQTGELDQPERLRK. A helical transmembrane segment spans residues 32–52; sequence IISVSSIAAGVQFGWALQLSL. Topologically, residues 53–65 are extracellular; that stretch reads LTPYVQLLGIPHK. A helical membrane pass occupies residues 66 to 86; that stretch reads WASLIWLCGPISGMLVQPIVG. The Cytoplasmic portion of the chain corresponds to 87 to 100; that stretch reads YHSDRCTSRFGRRR. Residues 101–121 traverse the membrane as a helical segment; that stretch reads PFIVAGAGLVTVAVFLIGYAA. Residues 122-138 are Extracellular-facing; the sequence is DIGHSMGDQLDKPPKTR. A helical transmembrane segment spans residues 139–159; sequence AIAIFALGFWILDVANNTLQG. Over 160–177 the chain is Cytoplasmic; sequence PCRAFLADLSAGNAKKTR. The chain crosses the membrane as a helical span at residues 178–198; it reads TANAFFSFFMAVGNVLGYAAG. Residues 199–223 lie on the Extracellular side of the membrane; it reads SYRNLYKVVPFTMTESCDLYCANLK. Residues 224–244 form a helical membrane-spanning segment; sequence TCFFLSITLLLIVTFVSLCYV. The Cytoplasmic segment spans residues 245–278; the sequence is KEKPWTPEPTADGKASNVPFFGEIFGAFKELKRP. Residues 279–299 form a helical membrane-spanning segment; the sequence is MWMLLIVTALNWIAWFPFLLF. At 300 to 332 the chain is on the extracellular side; it reads DTDWMGREVYGGNSDATATAASKKLYNDGVRAG. The chain crosses the membrane as a helical span at residues 333-353; the sequence is ALGLMLNAIVLGFMSLGVEWI. Residues 354–362 are Cytoplasmic-facing; the sequence is GRKLGGAKR. A helical membrane pass occupies residues 363-383; the sequence is LWGIVNFILAICLAMTVVVTK. Residues 384–407 lie on the Extracellular side of the membrane; sequence QAENHRRDHGGAKTGPPGNVTAGA. N-linked (GlcNAc...) asparagine glycosylation occurs at Asn-402. Residues 408–428 traverse the membrane as a helical segment; the sequence is LTLFAILGIPQAITFSIPFAL. Over 429–440 the chain is Cytoplasmic; the sequence is ASIFSTNSGAGQ. The helical transmembrane segment at 441 to 461 threads the bilayer; it reads GLSLGVLNLAIVVPQMVISVG. Residues 462-473 are Extracellular-facing; sequence GGPFDELFGGGN. Residues 474–494 traverse the membrane as a helical segment; that stretch reads IPAFVLGAIAAAVSGVLALTV. Over 495–512 the chain is Cytoplasmic; the sequence is LPSPPPDAPAFKATMGFH.

Belongs to the glycoside-pentoside-hexuronide (GPH) cation symporter transporter (TC 2.A.2.4) family. As to quaternary structure, homodimer. Interacts with SUC3 and SUC4. As to expression, expressed in leaves and, to a lower extent, in roots, flowers and stems. Highly specific to the phloem, exclusively localized in companion cells (at protein level).

The protein localises to the cell membrane. The catalysed reaction is sucrose(out) + H(+)(out) = sucrose(in) + H(+)(in). Its pathway is glycan biosynthesis; sucrose metabolism. Inhibited by protonophores (e.g. dinitrophenol and carbonyl cyanide m-chlorophenyl-hydrazone (CCCP)) and SH group inhibitors (e.g. N-ethylmaleimide (NEM) and p-chloromercuriphenyl sulphonic acid (PCMPS)). Its function is as follows. Responsible for the transport of sucrose into the cell, with the concomitant uptake of protons (symport system). Can also transport other glucosides such as maltose, arbutin (hydroquinone-beta-D-glucoside), salicin (2-(hydroxymethyl)phenyl-beta-D-glucoside), alpha-phenylglucoside, beta-phenylglucoside, alpha-paranitrophenylglucoside, beta-paranitrophenylglucoside, and paranitrophenyl-beta-thioglucoside. May also transport biotin. Required for apoplastic phloem sucrose loading in source tissues (e.g. leaves) in order to transport it to sink tissues (e.g. roots, flowers). The protein is Sucrose transport protein SUC2 of Arabidopsis thaliana (Mouse-ear cress).